The primary structure comprises 146 residues: Large ribosomal subunit protein uL13 (146 aa).

It belongs to the universal ribosomal protein uL13 family. Part of the 50S ribosomal subunit.

This protein is one of the early assembly proteins of the 50S ribosomal subunit, although it is not seen to bind rRNA by itself. It is important during the early stages of 50S assembly. This Methylobacillus flagellatus (strain ATCC 51484 / DSM 6875 / VKM B-1610 / KT) protein is Large ribosomal subunit protein uL13.